Reading from the N-terminus, the 565-residue chain is Periplasmic trehalase (565 aa).

A signal peptide spans 1–30 (MKSPTPSRPQKMALIPACIFLCFAALSVQA). Substrate is bound by residues Arg-152, 159–160 (WD), Asn-196, 205–207 (RSQ), 277–279 (RPE), and Gly-310. Residues Asp-312 and Glu-496 each act as proton donor/acceptor in the active site. Glu-511 lines the substrate pocket. Residues 539–565 (CDNVPATRPLSESTTQPLKQKEAEPTP) are disordered.

The protein belongs to the glycosyl hydrolase 37 family. As to quaternary structure, monomer.

It is found in the periplasm. The enzyme catalyses alpha,alpha-trehalose + H2O = alpha-D-glucose + beta-D-glucose. Provides the cells with the ability to utilize trehalose at high osmolarity by splitting it into glucose molecules that can subsequently be taken up by the phosphotransferase-mediated uptake system. The chain is Periplasmic trehalase from Escherichia coli (strain SMS-3-5 / SECEC).